The following is a 366-amino-acid chain: Histone-lysine N-methyltransferase SETD7 (366 aa).

MORN repeat units follow at residues 36-58 (FEGNFVHGEKNGRGKFFFFDGST), 59-81 (LEGYYVDDALQGQGVYTYEDGGV), and 106-128 (FKGQYKDNIRHGVCWIYYPDGGS). Residues 214-336 (ERVYVAESLI…ADEELTVAYG (123 aa)) enclose the SET domain. S-adenosyl-L-methionine is bound by residues 226–228 (AGE), Asn-296, His-297, and Glu-356.

It belongs to the class V-like SAM-binding methyltransferase superfamily. Histone-lysine methyltransferase family. SET7 subfamily. In terms of assembly, interacts with IPF1/PDX-1. Widely expressed. Expressed in pancreatic islets.

The protein localises to the nucleus. It is found in the chromosome. The catalysed reaction is L-lysyl(4)-[histone H3] + S-adenosyl-L-methionine = N(6)-methyl-L-lysyl(4)-[histone H3] + S-adenosyl-L-homocysteine + H(+). It catalyses the reaction L-lysyl-[protein] + S-adenosyl-L-methionine = N(6)-methyl-L-lysyl-[protein] + S-adenosyl-L-homocysteine + H(+). In terms of biological role, histone methyltransferase that specifically monomethylates 'Lys-4' of histone H3. H3 'Lys-4' methylation represents a specific tag for epigenetic transcriptional activation. Plays a central role in the transcriptional activation of genes such as collagenase or insulin. Recruited by IPF1/PDX-1 to the insulin promoter, leading to activate transcription. Also has methyltransferase activity toward non-histone proteins such as CGAS, p53/TP53, TAF10, and possibly TAF7 by recognizing and binding the [KR]-[STA]-K in substrate proteins. Monomethylates 'Lys-189' of TAF10, leading to increase the affinity of TAF10 for RNA polymerase II. Monomethylates 'Lys-372' of p53/TP53, stabilizing p53/TP53 and increasing p53/TP53-mediated transcriptional activation. Monomethylates 'Lys-491' of CGAS, promoting interaction between SGF29 and CGAS. The protein is Histone-lysine N-methyltransferase SETD7 (SETD7) of Homo sapiens (Human).